A 451-amino-acid polypeptide reads, in one-letter code: Speckle-type POZ protein homolog (451 aa).

Residues 51-75 (EVVSSGSGNSAHGRSISPSPSSASH) are disordered. The segment covering 60-75 (SAHGRSISPSPSSASH) has biased composition (low complexity). The MATH domain maps to 95-225 (KFNYMWTINN…GDRLSIFCEV (131 aa)). The 74-residue stretch at 265 to 338 (SDFTLVCKSD…MYTGQTKYIE (74 aa)) folds into the BTB domain.

This sequence belongs to the Tdpoz family.

The protein resides in the nucleus. Its subcellular location is the nucleus speckle. The protein operates within protein modification; protein ubiquitination. Mediates ubiquitination and proteasomal degradation of target proteins, most likely in complex with cul-3. May promote the degradation of bromodomain-containing proteins such as bet-1. The protein is Speckle-type POZ protein homolog of Caenorhabditis elegans.